The chain runs to 943 residues: Mechanosensitive ion channel protein BA (943 aa).

The disordered stretch occupies residues 1 to 67 (MPNPNDVTID…PPSSSLGFGH (67 aa)). Residues 1 to 107 (MPNPNDVTID…AVLNFSTVTR (107 aa)) lie on the Cytoplasmic side of the membrane. The span at 14-37 (TSVSSRGQTGARNNSTNIPNSPSG) shows a compositional bias: polar residues. Residues 108–130 (YLIYIAPLAALLAIPIIVGATAA) traverse the membrane as a helical segment. Residues 131–149 (EDAKIGGVSLPWFFCWVEV) lie on the Lumenal side of the membrane. The helical transmembrane segment at 150-175 (VWVSLWVCKLVAKVIPFVFQFVCGIV) threads the bilayer. Residues 176 to 195 (SAGTRKYALILRNLEIPITM) lie on the Cytoplasmic side of the membrane. A helical transmembrane segment spans residues 196-214 (VLWMIVSLVTFLPIMVYNP). Residues 215 to 233 (RNKREGDTETKSWEKSVKN) lie on the Lumenal side of the membrane. A helical membrane pass occupies residues 234–259 (VLFAFLVCALIFLGEKTLVQLISISY). At 260-468 (HRKQFDARIK…DQAIHVLDNL (209 aa)) the chain is on the cytoplasmic side. In terms of domain architecture, EF-hand spans 412–447 (GKEAEAEECFTMLDRDGNGDISLDEIILAISEIGRT). Ca(2+) contacts are provided by Asp-425, Asp-427, Asn-429, Asp-431, and Glu-436. Residues 469 to 489 (LATIAFIIAVLVFVSFVTSGF) traverse the membrane as a helical segment. Residues 490 to 502 (GTVIAAGATSLLS) lie on the Lumenal side of the membrane. The helical transmembrane segment at 503 to 523 (LSFVFATTAQEVLGSCIFLFV) threads the bilayer. The Cytoplasmic segment spans residues 524 to 943 (KHPFDIGDRV…QRRNYESRRL (420 aa)). Residues 677 to 943 (PGAAAEDAAA…QRRNYESRRL (267 aa)) form a disordered region. 2 stretches are compositionally biased toward low complexity: residues 678–687 (GAAAEDAAAA) and 744–759 (GASATAATGNNSAGSA). The span at 760 to 781 (YSETTLNNTVSEPYQRSFTPNT) shows a compositional bias: polar residues. Residues 798 to 810 (TERHLGVSHDSIA) show a composition bias toward basic and acidic residues. A compositionally biased stretch (polar residues) spans 827–842 (TTANQSLASPTTMQSE). The segment covering 857–880 (PSSSQYSQQYPQQQSQSPYSYTYS) has biased composition (low complexity). The span at 886–904 (PESSLQPLEHTTSYNQSLP) shows a compositional bias: polar residues. Residues 916–943 (NSLEGHSPHVDPRHMTEEQRRNYESRRL) are compositionally biased toward basic and acidic residues.

The protein belongs to the MscS (TC 1.A.23) family.

The protein resides in the cell membrane. The enzyme catalyses Ca(2+)(in) = Ca(2+)(out). Its function is as follows. Acts as a mechanosensitive calcium channel in response to membrane stretch. Regulates intracellular calcium levels and cell volume for survival in response to hypo-osmotic shock. Involved in maintaining vacuole integrity and protecting the nuclear envelope upon hypo-osmotic shock. seems to contribute to CaCl2 toxicityIn contracstz to mscA, mscB seems to contribute to CaCl(2) toxicity. This Emericella nidulans (strain FGSC A4 / ATCC 38163 / CBS 112.46 / NRRL 194 / M139) (Aspergillus nidulans) protein is Mechanosensitive ion channel protein BA.